We begin with the raw amino-acid sequence, 2325 residues long: Centriolin (2325 aa).

The tract at residues 1–33 (MKKGSQQKIFSKAKIPSSSHSPIPSSMSNMRSR) is disordered. The span at 16–33 (PSSSHSPIPSSMSNMRSR) shows a compositional bias: low complexity. LRR repeat units lie at residues 126–147 (KLEVLNLSYNLIGKIEKLDKLL), 148–169 (KLRELNLSYNKISKIEGIENMC), 170–191 (NLQKLNLAGNEIEHIPVWLGKK), and 194–215 (SLRVLNLKGNKISSLQDISKLK). One can recognise an LRRCT domain in the interval 228-266 (NPVVTLPHYLQFTIFHLRSLESLEGQPVTTQDRQEAFER). 2 coiled-coil regions span residues 267 to 343 (FSLE…IELT) and 435 to 799 (LDTQ…LNHV). A Phosphoserine modification is found at Ser831. A coiled-coil region spans residues 851-1101 (LARSKWERDE…ARLQNVLDLT (251 aa)). The segment at 1150–1241 (PSSKVSSHSS…DQEEPPFVPP (92 aa)) is disordered. Residues 1224–1235 (SQEESELDDQEE) are compositionally biased toward acidic residues. A coiled-coil region spans residues 1317–2255 (EHHNLENEVS…DRLKAQLRHC (939 aa)). Ser1475 is modified (phosphoserine). Residues 1948–2118 (MMFQRLQKER…ELVAQDNHER (171 aa)) are required for centrosome localization. The interval 1985-2325 (QKSKLDQVLS…QNQEKNASAR (341 aa)) is sufficient for interaction with HOOK2. Positions 2288-2325 (VTSTSADSASSPSLSQLESSLTEDSQLGQNQEKNASAR) are disordered. Residues 2290-2314 (STSADSASSPSLSQLESSLTEDSQL) are compositionally biased toward low complexity. Over residues 2315-2325 (GQNQEKNASAR) the composition is skewed to polar residues.

Interacts with HOOK2. Interacts with EXOC6 and SNAPIN. Associates with the exocyst complex. As to expression, widely expressed with highest levels in testis and trachea.

The protein resides in the cytoplasm. It localises to the cytoskeleton. It is found in the microtubule organizing center. Its subcellular location is the centrosome. The protein localises to the midbody. The protein resides in the midbody ring. Functionally, involved in cell cycle progression and cytokinesis. During the late steps of cytokinesis, anchors exocyst and SNARE complexes at the midbody, thereby allowing secretory vesicle-mediated abscission. In Homo sapiens (Human), this protein is Centriolin (CNTRL).